A 243-amino-acid polypeptide reads, in one-letter code: Ribonuclease 3 (243 aa).

Residues 10–146 (VNRFRKRFDT…FIGALYLDQG (137 aa)) form the RNase III domain. Position 59 (glutamate 59) interacts with Mg(2+). Residue aspartate 63 is part of the active site. 2 residues coordinate Mg(2+): aspartate 132 and glutamate 135. Glutamate 135 is a catalytic residue. A DRBM domain is found at 172–241 (DFKTQFQEYV…AKSAYKQLKQ (70 aa)). Over residues 219 to 231 (GKGKTKKESEQRA) the composition is skewed to basic and acidic residues. The tract at residues 219–243 (GKGKTKKESEQRAAKSAYKQLKQIK) is disordered.

The protein belongs to the ribonuclease III family. In terms of assembly, homodimer. Mg(2+) serves as cofactor.

It localises to the cytoplasm. The catalysed reaction is Endonucleolytic cleavage to 5'-phosphomonoester.. In terms of biological role, digests double-stranded RNA. Involved in the processing of primary rRNA transcript to yield the immediate precursors to the large and small rRNAs (23S and 16S). Processes some mRNAs, and tRNAs when they are encoded in the rRNA operon. Processes pre-crRNA and tracrRNA of type II CRISPR loci if present in the organism. This chain is Ribonuclease 3, found in Staphylococcus aureus (strain Mu3 / ATCC 700698).